The following is a 295-amino-acid chain: Myosin light chain kinase A (295 aa).

The 258-residue stretch at 8 to 265 folds into the Protein kinase domain; that stretch reads YEFKEELGRG…ATNALNHPWL (258 aa). ATP-binding positions include 14 to 22 and Lys37; that span reads LGRGAFSIV. Asp130 functions as the Proton acceptor in the catalytic mechanism. Thr166 and Thr289 each carry phosphothreonine. Residues 264 to 295 form an autoinhibitory domain region; sequence WLKSNNSNNTIDTVKMKEYIVERQKTQTKLVN.

The protein belongs to the protein kinase superfamily. CAMK Ser/Thr protein kinase family. CaMK subfamily. Autophosphorylated. Transiently phosphorylated on Thr-166 and Thr-289. This phosphorylation is gbpC-dependent.

The enzyme catalyses L-seryl-[myosin light chain] + ATP = O-phospho-L-seryl-[myosin light chain] + ADP + H(+). The catalysed reaction is L-threonyl-[myosin light chain] + ATP = O-phospho-L-threonyl-[myosin light chain] + ADP + H(+). With respect to regulation, possesses an autoinhibitory domain. Autophosphorylation appears to increase the enzymatic activity. Activation is gbdC-dependent. Does not have a calmodulin-binding domain. In terms of biological role, phosphorylates a specific serine in the N-terminus of a myosin light chain. Phosphorylates regulatory myosin light chain (mlcR) during chemotaxis. mlcR phosphorylation increases the motility and actin-activated ATPase activity of myosin, contributing to chemotaxis. The protein is Myosin light chain kinase A (mlkA) of Dictyostelium discoideum (Social amoeba).